The chain runs to 101 residues: Ascorbate-specific PTS system EIIB component (101 aa).

The region spanning 3 to 96 (VRILAVCGNG…KLLEVIKAHF (94 aa)) is the PTS EIIB type-2 domain. Catalysis depends on Cys9, which acts as the Phosphocysteine intermediate. Cys9 is subject to Phosphocysteine.

It localises to the cytoplasm. The catalysed reaction is N(pros)-phospho-L-histidyl-[protein] + L-ascorbate(out) = L-ascorbate 6-phosphate(in) + L-histidyl-[protein]. Its function is as follows. The phosphoenolpyruvate-dependent sugar phosphotransferase system (sugar PTS), a major carbohydrate active transport system, catalyzes the phosphorylation of incoming sugar substrates concomitantly with their translocation across the cell membrane. The enzyme II UlaABC PTS system is involved in ascorbate transport. The chain is Ascorbate-specific PTS system EIIB component (ulaB) from Escherichia coli O6:H1 (strain CFT073 / ATCC 700928 / UPEC).